Consider the following 611-residue polypeptide: DNA mismatch repair protein MutL (611 aa).

Belongs to the DNA mismatch repair MutL/HexB family.

In terms of biological role, this protein is involved in the repair of mismatches in DNA. It is required for dam-dependent methyl-directed DNA mismatch repair. May act as a 'molecular matchmaker', a protein that promotes the formation of a stable complex between two or more DNA-binding proteins in an ATP-dependent manner without itself being part of a final effector complex. In Rickettsia bellii (strain RML369-C), this protein is DNA mismatch repair protein MutL.